The sequence spans 188 residues: Transcription factor E (188 aa).

The HTH TFE/IIEalpha-type domain maps to 9–98; sequence DLEVLRDVTL…SWRLNLREVL (90 aa).

Belongs to the TFE family. As to quaternary structure, monomer. Interaction with RNA polymerase subunits RpoF and RpoE is necessary for Tfe stimulatory transcription activity. Able to interact with Tbp and RNA polymerase in the absence of DNA promoter. Interacts both with the preinitiation and elongation complexes.

Transcription factor that plays a role in the activation of archaeal genes transcribed by RNA polymerase. Facilitates transcription initiation by enhancing TATA-box recognition by TATA-box-binding protein (Tbp), and transcription factor B (Tfb) and RNA polymerase recruitment. Not absolutely required for transcription in vitro, but particularly important in cases where Tbp or Tfb function is not optimal. It dynamically alters the nucleic acid-binding properties of RNA polymerases by stabilizing the initiation complex and destabilizing elongation complexes. Seems to translocate with the RNA polymerase following initiation and acts by binding to the non template strand of the transcription bubble in elongation complexes. The sequence is that of Transcription factor E from Methanopyrus kandleri (strain AV19 / DSM 6324 / JCM 9639 / NBRC 100938).